The following is a 367-amino-acid chain: S-adenosylmethionine:tRNA ribosyltransferase-isomerase (367 aa).

This sequence belongs to the QueA family. As to quaternary structure, monomer.

The protein resides in the cytoplasm. The catalysed reaction is 7-aminomethyl-7-carbaguanosine(34) in tRNA + S-adenosyl-L-methionine = epoxyqueuosine(34) in tRNA + adenine + L-methionine + 2 H(+). The protein operates within tRNA modification; tRNA-queuosine biosynthesis. Transfers and isomerizes the ribose moiety from AdoMet to the 7-aminomethyl group of 7-deazaguanine (preQ1-tRNA) to give epoxyqueuosine (oQ-tRNA). This is S-adenosylmethionine:tRNA ribosyltransferase-isomerase from Beijerinckia indica subsp. indica (strain ATCC 9039 / DSM 1715 / NCIMB 8712).